The following is a 76-amino-acid chain: Protein sprouty homolog 1 (76 aa).

In terms of domain architecture, SPR spans 1 to 52; it reads NPCSCSQSHCCSRYLCMGAMSLFLPCLLCYPPAKGCLKLCRGCYDRVNRPGC.

The protein belongs to the sprouty family. Brain and interlimb region.

The protein localises to the cytoplasm. It is found in the membrane. Functionally, inhibits fibroblast growth factor (FGF)-induced retinal lens fiber differentiation. Inhibits TGFB-induced epithelial-to-mesenchymal transition in lens epithelial cells. The sequence is that of Protein sprouty homolog 1 (SPRY1) from Gallus gallus (Chicken).